The chain runs to 363 residues: Carbamoyl phosphate synthase small chain (363 aa).

A CPSase region spans residues 1-171 (MEDGTLFAGA…PYRIPGPGPR (171 aa)). The L-glutamine site is built by S39, G219, and G221. The Glutamine amidotransferase type-1 domain maps to 171 to 359 (RVVAVDFGAK…LALVDRSAVS (189 aa)). C248 serves as the catalytic Nucleophile. The L-glutamine site is built by L249, Q252, N290, G292, and Y293. Residues H332 and E334 contribute to the active site.

This sequence belongs to the CarA family. As to quaternary structure, composed of two chains; the small (or glutamine) chain promotes the hydrolysis of glutamine to ammonia, which is used by the large (or ammonia) chain to synthesize carbamoyl phosphate. Tetramer of heterodimers (alpha,beta)4.

It carries out the reaction hydrogencarbonate + L-glutamine + 2 ATP + H2O = carbamoyl phosphate + L-glutamate + 2 ADP + phosphate + 2 H(+). The enzyme catalyses L-glutamine + H2O = L-glutamate + NH4(+). It functions in the pathway amino-acid biosynthesis; L-arginine biosynthesis; carbamoyl phosphate from bicarbonate: step 1/1. The protein operates within pyrimidine metabolism; UMP biosynthesis via de novo pathway; (S)-dihydroorotate from bicarbonate: step 1/3. Small subunit of the glutamine-dependent carbamoyl phosphate synthetase (CPSase). CPSase catalyzes the formation of carbamoyl phosphate from the ammonia moiety of glutamine, carbonate, and phosphate donated by ATP, constituting the first step of 2 biosynthetic pathways, one leading to arginine and/or urea and the other to pyrimidine nucleotides. The small subunit (glutamine amidotransferase) binds and cleaves glutamine to supply the large subunit with the substrate ammonia. This is Carbamoyl phosphate synthase small chain from Symbiobacterium thermophilum (strain DSM 24528 / JCM 14929 / IAM 14863 / T).